Here is a 294-residue protein sequence, read N- to C-terminus: UDP-3-O-acyl-N-acetylglucosamine deacetylase (294 aa).

3 residues coordinate Zn(2+): His75, His232, and Asp236. Catalysis depends on His259, which acts as the Proton donor.

It belongs to the LpxC family. It depends on Zn(2+) as a cofactor.

It carries out the reaction a UDP-3-O-[(3R)-3-hydroxyacyl]-N-acetyl-alpha-D-glucosamine + H2O = a UDP-3-O-[(3R)-3-hydroxyacyl]-alpha-D-glucosamine + acetate. It participates in glycolipid biosynthesis; lipid IV(A) biosynthesis; lipid IV(A) from (3R)-3-hydroxytetradecanoyl-[acyl-carrier-protein] and UDP-N-acetyl-alpha-D-glucosamine: step 2/6. In terms of biological role, catalyzes the hydrolysis of UDP-3-O-myristoyl-N-acetylglucosamine to form UDP-3-O-myristoylglucosamine and acetate, the committed step in lipid A biosynthesis. In Campylobacter jejuni subsp. doylei (strain ATCC BAA-1458 / RM4099 / 269.97), this protein is UDP-3-O-acyl-N-acetylglucosamine deacetylase.